We begin with the raw amino-acid sequence, 443 residues long: Cyclin-A2-1 (443 aa).

The span at 1-10 (MHRASSKHTN) shows a compositional bias: basic residues. Positions 1–61 (MHRASSKHTN…KRVARPSNKR (61 aa)) are disordered. A compositionally biased stretch (basic and acidic residues) spans 11–25 (AKKEAISTSKIRDNN).

The protein belongs to the cyclin family. Cyclin AB subfamily. As to expression, expressed in tissues with active cell division: apical root and shoot meristems, lateral root and leaf primordia, floral meristems and developing pollen.

In terms of biological role, may negatively regulate endocycles and act as a regulator of ploidy levels in endoreduplication. This Arabidopsis thaliana (Mouse-ear cress) protein is Cyclin-A2-1 (CYCA2-1).